A 513-amino-acid chain; its full sequence is MDAIVVDSQNCFIIILLCSFSLISYFVFFKKPKVNFDLLPSPPSLPIIGHLHLLLSTLIHKSLQKLSSKYGPLLHLRIFNIPFILVSSDSLAYEIFRDHDVNVSSRGVGAIDESLAFGSSGFIQAPYGDYWKFMKKLIATKLLGPQPLVRSQDFRSEELERFYKRLFDKAMKKESVMIHKEASRFVNNSLYKMCTGRSFSVENNEVERIMELTADLGALSQKFFVSKMFRKLLEKLGISLFKTEIMVVSRRFSELVERILIEYEEKMDGHQGTQFMDALLAAYRDENTEYKITRSHIKSLLTEFFIGAADASSIAIQWAMADIINNREILEKLREEIDSVVGKTRLVQETDLPNLPYLQAVVKEGLRLHPPTPLVVREFQEGCEIGGFFVPKNTTLIVNSYAMMRDPDSWQDPDEFKPERFLASLSREEDKKEKILNFLPFGSGRRMCPGSNLGYIFVGTAIGMMVQCFDWEINGDKINMEEATGGFLITMAHPLTCTPIPLPRTQNSLISHL.

A helical transmembrane segment spans residues 9–29; sequence QNCFIIILLCSFSLISYFVFF. Residue cysteine 448 coordinates heme.

The protein belongs to the cytochrome P450 family. Heme serves as cofactor. Expressed in root stele, root cortex, root epidermis, root pericycle of the root hair zone, and quiescent center at the root meristematic zone.

The protein localises to the membrane. Its function is as follows. Cleaves the arabidiol side chain at C15 to form 14-apo-arabidiol and a side-chain fragment. Involved in the biosynthesis of the volatile homoterpene (E)-4,8-dimethyl-1,3,7-nonatriene (DMNT) in roots. Involved in the production of DMNT by degrading the triterpene arabidiol. May be involved in the defense again the fungal root pathogen Pythium irregulare by producing DMNT. The polypeptide is Cytochrome P450 705A1 (Arabidopsis thaliana (Mouse-ear cress)).